A 176-amino-acid chain; its full sequence is Disulfide bond formation protein B (176 aa).

At 1–11 (MLQLTTYRNLQ) the chain is on the cytoplasmic side. The chain crosses the membrane as a helical span at residues 12–28 (VFLVIMTAIGMSFALFF). The Periplasmic portion of the chain corresponds to 29–46 (LQRYMGFSPCPLCIFQRI). A disulfide bridge connects residues Cys38 and Cys41. Residues 47–63 (GLMIMGGFALIAALFHP) traverse the membrane as a helical segment. Over 64–70 (KSMVIRL) the chain is Cytoplasmic. A helical membrane pass occupies residues 71–88 (LLWLGSLAGIGWAAIVAG). Topologically, residues 89 to 145 (RHVWLQHLPADQVPSCGPGLDYWLDTLPMQQVLKEVFAGSGECASIEWTFLGLSIPE) are periplasmic. Cysteines 104 and 131 form a disulfide. Residues 146-164 (QSLILFSILILTHLLILWR) traverse the membrane as a helical segment. The Cytoplasmic portion of the chain corresponds to 165-176 (IVRPSTPKPLAR).

The protein belongs to the DsbB family.

The protein localises to the cell inner membrane. Required for disulfide bond formation in some periplasmic proteins. Acts by oxidizing the DsbA protein. This Psychrobacter arcticus (strain DSM 17307 / VKM B-2377 / 273-4) protein is Disulfide bond formation protein B.